The sequence spans 153 residues: Natriuretic peptides A (153 aa).

The N-terminal stretch at 1-25 (MGSFSTIMASFLLFLAFQLQGQTRA) is a signal peptide. 2 propeptides span residues 26–123 (NPVY…AAPR) and 93–103 (DGGALGRGSWD). A disordered region spans residues 54 to 105 (EDEVMPPQVLSDQSEEERAALSPLPEVPPWTGEVNPAQRDGGALGRGSWDSS). A Phosphoserine modification is found at S129. C130 and C146 are oxidised to a cystine. The segment at 147–151 (NSFRY) is important for degradation of atrial natriuretic peptide by IDE.

This sequence belongs to the natriuretic peptide family. In terms of assembly, homodimer; disulfide-linked antiparallel dimer. In terms of processing, the precursor molecule is proteolytically cleaved by CORIN at Arg-123 to produce the atrial natriuretic peptide. Undergoes further proteolytic cleavage by unknown proteases to give rise to long-acting natriuretic peptide, vessel dilator and kaliuretic peptide. Additional processing gives rise to the auriculin and atriopeptin peptides. In the kidneys, alternative processing by an unknown protease results in the peptide urodilatin. Post-translationally, cleavage by MME initiates degradation of the factor and thereby regulates its activity. Degradation by IDE results in reduced activation of NPR1 (in vitro). During IDE degradation, the resulting products can temporarily stimulate NPR2 to produce cGMP, before the fragments are completely degraded and inactivated by IDE (in vitro). Degraded by IDE. In terms of processing, phosphorylation on Ser-129 decreases vasorelaxant activity.

It is found in the secreted. The protein localises to the perikaryon. The protein resides in the cell projection. Hormone that plays a key role in mediating cardio-renal homeostasis, and is involved in vascular remodeling and regulating energy metabolism. Acts by specifically binding and stimulating NPR1 to produce cGMP, which in turn activates effector proteins, such as PRKG1, that drive various biological responses. Regulates vasodilation, natriuresis, diuresis and aldosterone synthesis and is therefore essential for regulating blood pressure, controlling the extracellular fluid volume and maintaining the fluid-electrolyte balance. Also involved in inhibiting cardiac remodeling and cardiac hypertrophy by inducing cardiomyocyte apoptosis and attenuating the growth of cardiomyocytes and fibroblasts. Plays a role in female pregnancy by promoting trophoblast invasion and spiral artery remodeling in uterus, and thus prevents pregnancy-induced hypertension. In adipose tissue, acts in various cGMP- and PKG-dependent pathways to regulate lipid metabolism and energy homeostasis. This includes up-regulating lipid metabolism and mitochondrial oxygen utilization by activating the AMP-activated protein kinase (AMPK), and increasing energy expenditure by acting via MAPK11 to promote the UCP1-dependent thermogenesis of brown adipose tissue. Binds the clearance receptor NPR3 which removes the hormone from circulation. Its function is as follows. May have a role in cardio-renal homeostasis through regulation of natriuresis, diuresis, vasodilation, and inhibiting aldosterone synthesis. In vitro, promotes the production of cGMP and induces vasodilation. May promote natriuresis, at least in part, by enhancing prostaglandin E2 synthesis resulting in the inhibition of renal Na+-K+-ATPase. However reports on the involvement of this peptide in mammal blood volume and blood pressure homeostasis are conflicting; according to a report, in vivo it is not sufficient to activate cGMP and does not inhibit collecting duct transport nor effect diuresis and natriuresis. Appears to bind to specific receptors that are distinct from the receptors bound by atrial natriuretic peptide and vessel dilator. Possibly enhances protein excretion in urine by decreasing proximal tubular protein reabsorption. In terms of biological role, may have a role in cardio-renal homeostasis through regulation of natriuresis, diuresis, and vasodilation. In vitro, promotes the production of cGMP and induces vasodilation. May promote natriuresis, at least in part, by enhancing prostaglandin E2 synthesis resulting in the inhibition of renal Na+-K+-ATPase. However reports on the involvement of this peptide in mammal blood volume and blood pressure homeostasis are conflicting; according to a report it is not sufficient to activate cGMP and does not inhibit collecting duct transport nor effect diuresis and natriuresis. Appears to bind to specific receptors that are distinct from the receptors bound by the atrial natriuretic and long-acting natriuretic peptides. Possibly functions in protein excretion in urine by maintaining the integrity of the proximal tubules and enhancing protein excretion by decreasing proximal tubular protein reabsorption. Functionally, may have a role in cardio-renal homeostasis through regulation of diuresis and inhibiting aldosterone synthesis. In vitro, promotes the production of cGMP and induces vasodilation. May promote natriuresis, at least in part, by enhancing prostaglandin E2 synthesis resulting in the inhibition of renal Na+-K+-ATPase. May have a role in potassium excretion but not sodium excretion (natriuresis). Possibly enhances protein excretion in urine by decreasing proximal tubular protein reabsorption. Hormone produced in the kidneys that appears to be important for maintaining cardio-renal homeostasis. Mediates vasodilation, natriuresis and diuresis primarily in the renal system, in order to maintain the extracellular fluid volume and control the fluid-electrolyte balance. Specifically binds and stimulates cGMP production by renal transmembrane receptors, likely NPR1. Urodilatin not ANP, may be the natriuretic peptide responsible for the regulation of sodium and water homeostasis in the kidney. Its function is as follows. May have a role in cardio-renal homeostasis through regulation of natriuresis and vasodilation. In vivo promotes natriuresis and in vitro, vasodilates renal artery strips. In terms of biological role, may have a role in cardio-renal homeostasis through regulation of regulation of natriuresis and vasodilation. In vivo promotes natriuresis. In vitro, vasodilates intestinal smooth muscle but not smooth muscle strips. Functionally, may have a role in cardio-renal homeostasis through regulation of natriuresis and vasodilation. In vivo promotes natriuresis. In vitro, selectively vasodilates intestinal and vascular smooth muscle strips. May have a role in cardio-renal homeostasis through regulation of natriuresis and vasodilation. In vivo promotes natriuresis. In vitro, selectively vasodilates intestinal smooth muscle but not vascular smooth muscle strips. This chain is Natriuretic peptides A (NPPA), found in Equus caballus (Horse).